A 364-amino-acid polypeptide reads, in one-letter code: Ribosomal RNA large subunit methyltransferase F (364 aa).

The interval 1–30 (MTNKRKSAKPLEPAKRAPKPRTKKSRDLSA) is disordered.

This sequence belongs to the methyltransferase superfamily. METTL16/RlmF family.

The protein localises to the cytoplasm. The catalysed reaction is adenosine(1618) in 23S rRNA + S-adenosyl-L-methionine = N(6)-methyladenosine(1618) in 23S rRNA + S-adenosyl-L-homocysteine + H(+). Specifically methylates the adenine in position 1618 of 23S rRNA. This Vibrio vulnificus (strain CMCP6) protein is Ribosomal RNA large subunit methyltransferase F.